A 78-amino-acid polypeptide reads, in one-letter code: Colicin-V immunity protein (78 aa).

In terms of biological role, this protein is able to protect a cell, which harbors the plasmid ColV encoding colicin V, against colicin V. This chain is Colicin-V immunity protein (cvi), found in Escherichia coli.